The primary structure comprises 87 residues: MSERNQRKVYVGRVVSDKMDKTITVLVETYKKHPLYGKRVKYSKKYKAHDEHNIAKVGDIVKIMETRPLSATKRFRLVEVVEKAVIL.

Belongs to the universal ribosomal protein uS17 family. In terms of assembly, part of the 30S ribosomal subunit.

One of the primary rRNA binding proteins, it binds specifically to the 5'-end of 16S ribosomal RNA. This Geobacillus thermodenitrificans (strain NG80-2) protein is Small ribosomal subunit protein uS17.